A 65-amino-acid polypeptide reads, in one-letter code: Large ribosomal subunit protein bL35 (65 aa).

The disordered stretch occupies residues 1 to 25 (MPKMKSHRGAAKRFKKTGTGKLKRA).

It belongs to the bacterial ribosomal protein bL35 family.

This Clostridium botulinum (strain Eklund 17B / Type B) protein is Large ribosomal subunit protein bL35.